An 886-amino-acid chain; its full sequence is DNA mismatch repair protein MutS (886 aa).

Position 641–648 (glycine 641–serine 648) interacts with ATP.

It belongs to the DNA mismatch repair MutS family.

Its function is as follows. This protein is involved in the repair of mismatches in DNA. It is possible that it carries out the mismatch recognition step. This protein has a weak ATPase activity. This is DNA mismatch repair protein MutS from Rickettsia akari (strain Hartford).